We begin with the raw amino-acid sequence, 103 residues long: Small ribosomal subunit protein uS10 (103 aa).

The protein belongs to the universal ribosomal protein uS10 family. As to quaternary structure, part of the 30S ribosomal subunit.

Involved in the binding of tRNA to the ribosomes. This is Small ribosomal subunit protein uS10 from Vibrio campbellii (strain ATCC BAA-1116).